Here is a 514-residue protein sequence, read N- to C-terminus: ATP synthase subunit alpha (514 aa).

170-177 (GDRQIGKT) contacts ATP.

It belongs to the ATPase alpha/beta chains family. F-type ATPases have 2 components, CF(1) - the catalytic core - and CF(0) - the membrane proton channel. CF(1) has five subunits: alpha(3), beta(3), gamma(1), delta(1), epsilon(1). CF(0) has three main subunits: a(1), b(2) and c(9-12). The alpha and beta chains form an alternating ring which encloses part of the gamma chain. CF(1) is attached to CF(0) by a central stalk formed by the gamma and epsilon chains, while a peripheral stalk is formed by the delta and b chains.

It localises to the cell inner membrane. It catalyses the reaction ATP + H2O + 4 H(+)(in) = ADP + phosphate + 5 H(+)(out). Produces ATP from ADP in the presence of a proton gradient across the membrane. The alpha chain is a regulatory subunit. This chain is ATP synthase subunit alpha, found in Pseudomonas entomophila (strain L48).